The sequence spans 779 residues: Beta-galactosidase 15 (779 aa).

An N-terminal signal peptide occupies residues 1 to 19 (MVSLSFILCCVLVSSCAYA). Asn148 is a glycosylation site (N-linked (GlcNAc...) asparagine). The active-site Proton donor is the Glu178. Glu247 functions as the Nucleophile in the catalytic mechanism. 6 N-linked (GlcNAc...) asparagine glycosylation sites follow: Asn248, Asn345, Asn374, Asn489, Asn495, and Asn555. The 86-residue stretch at 694–779 (VYEKNVLELS…AKRLAVEAIC (86 aa)) folds into the SUEL-type lectin domain.

It belongs to the glycosyl hydrolase 35 family. Ubiquitous, with higher levels in roots and siliques.

The protein localises to the secreted. The protein resides in the extracellular space. Its subcellular location is the apoplast. The enzyme catalyses Hydrolysis of terminal non-reducing beta-D-galactose residues in beta-D-galactosides.. The polypeptide is Beta-galactosidase 15 (BGAL15) (Arabidopsis thaliana (Mouse-ear cress)).